The chain runs to 109 residues: MAAAAGSRVFGLLGRSRLQLSRCMSSGAHGEEGSARMWKALTYFVALPGVGVSMLNVFLKSHHGEEERPEFVAYPHLRIRSKPFPWGDGNHTLFHNPHVNPLPTGYEDE.

The transit peptide at 1–24 (MAAAAGSRVFGLLGRSRLQLSRCM) directs the protein to the mitochondrion. Residues 25–34 (SSGAHGEEGS) lie on the Mitochondrial matrix side of the membrane. A helical membrane pass occupies residues 35 to 59 (ARMWKALTYFVALPGVGVSMLNVFL). Residues 60-109 (KSHHGEEERPEFVAYPHLRIRSKPFPWGDGNHTLFHNPHVNPLPTGYEDE) lie on the Mitochondrial intermembrane side of the membrane.

This sequence belongs to the cytochrome c oxidase subunit 6A family. Component of the cytochrome c oxidase (complex IV, CIV), a multisubunit enzyme composed of 14 subunits. The complex is composed of a catalytic core of 3 subunits MT-CO1, MT-CO2 and MT-CO3, encoded in the mitochondrial DNA, and 11 supernumerary subunits COX4I1 (or COX4I2), COX5A, COX5B, COX6A2 (or COX6A1), COX6B1 (or COX6B2), COX6C, COX7A1 (or COX7A2), COX7B, COX7C, COX8B and NDUFA4, which are encoded in the nuclear genome. The complex exists as a monomer or a dimer and forms supercomplexes (SCs) in the inner mitochondrial membrane with NADH-ubiquinone oxidoreductase (complex I, CI) and ubiquinol-cytochrome c oxidoreductase (cytochrome b-c1 complex, complex III, CIII), resulting in different assemblies (supercomplex SCI(1)III(2)IV(1) and megacomplex MCI(2)III(2)IV(2)).

The protein resides in the mitochondrion inner membrane. Its pathway is energy metabolism; oxidative phosphorylation. Component of the cytochrome c oxidase, the last enzyme in the mitochondrial electron transport chain which drives oxidative phosphorylation. The respiratory chain contains 3 multisubunit complexes succinate dehydrogenase (complex II, CII), ubiquinol-cytochrome c oxidoreductase (cytochrome b-c1 complex, complex III, CIII) and cytochrome c oxidase (complex IV, CIV), that cooperate to transfer electrons derived from NADH and succinate to molecular oxygen, creating an electrochemical gradient over the inner membrane that drives transmembrane transport and the ATP synthase. Cytochrome c oxidase is the component of the respiratory chain that catalyzes the reduction of oxygen to water. Electrons originating from reduced cytochrome c in the intermembrane space (IMS) are transferred via the dinuclear copper A center (CU(A)) of subunit 2 and heme A of subunit 1 to the active site in subunit 1, a binuclear center (BNC) formed by heme A3 and copper B (CU(B)). The BNC reduces molecular oxygen to 2 water molecules unsing 4 electrons from cytochrome c in the IMS and 4 protons from the mitochondrial matrix. This is Cytochrome c oxidase subunit 6A1, mitochondrial (COX6A1) from Bos taurus (Bovine).